Consider the following 479-residue polypeptide: Ribulose bisphosphate carboxylase large chain (479 aa).

Positions 1–2 (MS) are excised as a propeptide. Residues Asn-123 and Thr-173 each contribute to the substrate site. The active-site Proton acceptor is the Lys-175. Lys-177 is a binding site for substrate. Residues Lys-201, Asp-203, and Glu-204 each contribute to the Mg(2+) site. Lys-201 carries the post-translational modification N6-carboxylysine. Position 208 is a phosphoserine (Ser-208). The active-site Proton acceptor is the His-294. Substrate-binding residues include Arg-295 and His-327. Thr-330 carries the post-translational modification Phosphothreonine. Substrate is bound at residue Ser-379.

This sequence belongs to the RuBisCO large chain family. Type I subfamily. As to quaternary structure, heterohexadecamer of 8 large chains and 8 small chains; disulfide-linked. The disulfide link is formed within the large subunit homodimers. Requires Mg(2+) as cofactor. In terms of processing, the disulfide bond which can form in the large chain dimeric partners within the hexadecamer appears to be associated with oxidative stress and protein turnover.

The protein resides in the plastid. Its subcellular location is the chloroplast. The enzyme catalyses 2 (2R)-3-phosphoglycerate + 2 H(+) = D-ribulose 1,5-bisphosphate + CO2 + H2O. It catalyses the reaction D-ribulose 1,5-bisphosphate + O2 = 2-phosphoglycolate + (2R)-3-phosphoglycerate + 2 H(+). Its function is as follows. RuBisCO catalyzes two reactions: the carboxylation of D-ribulose 1,5-bisphosphate, the primary event in carbon dioxide fixation, as well as the oxidative fragmentation of the pentose substrate in the photorespiration process. Both reactions occur simultaneously and in competition at the same active site. The protein is Ribulose bisphosphate carboxylase large chain of Crucihimalaya wallichii (Rock-cress).